The chain runs to 490 residues: MSLSTLSHPAAAAAAATGSGKSHFRTAPAAQSVRFPKARPPVPAAVSAASAAVHADPAEDRVSSLSQVSGVLGSQWGDEGKGKLVDVLAPRFDIVARCQGGANAGHTIYNAEGKKFALHLVPSGILHEGTLCVVGNGAVIHVPGFFGEIDGLESNGVRCDGRILVSDRAHLLFDLHQVVDGLREAELENSFIGTTKRGIGPCYSSKVTRNGLRVCDLRHMDTFGDKLDVLFKDAASRFQGFQYSKSMLKEEVERYKKFADRLEPFIADTVHVLNESIQQKKKILVEGGQATMLDIDFGTYPFVTSSSPSAGGICTGLGIAPRVIGDLIGVVKAYTSRVGSGPFPTELFGEEGDRLRKAGMEFGTTTGRPRRCGWLDIVALKYCCQINGFSSFNLTKLDVLSGLSEIKVGVSYSRPDGQKLQSFPGDLDTLEQVQVNYEVLPGWQTDISSVRSYNELPQAARLYVERIEELVGVPVHYIGVGPGRDALIYK.

The transit peptide at 1 to 47 (MSLSTLSHPAAAAAAATGSGKSHFRTAPAAQSVRFPKARPPVPAAVS) directs the protein to the chloroplast. Residues 14–36 (AAATGSGKSHFRTAPAAQSVRFP) are disordered. Residues 77–83 (GDEGKGK) and 105–107 (GHT) contribute to the GTP site. Asp78 acts as the Proton acceptor in catalysis. The Mg(2+) site is built by Asp78 and Gly105. Residues 78 to 81 (DEGK), 103 to 106 (NAGH), Thr195, Arg209, Gln289, Thr304, and Arg368 each bind IMP. The active-site Proton donor is the His106. 364 to 370 (TTTGRPR) serves as a coordination point for substrate. GTP is bound by residues Arg370, 396–398 (KLD), and 479–481 (GVG).

Belongs to the adenylosuccinate synthetase family. As to quaternary structure, homodimer. Mg(2+) serves as cofactor.

The protein resides in the plastid. It is found in the chloroplast. It carries out the reaction IMP + L-aspartate + GTP = N(6)-(1,2-dicarboxyethyl)-AMP + GDP + phosphate + 2 H(+). Its pathway is purine metabolism; AMP biosynthesis via de novo pathway; AMP from IMP: step 1/2. Functionally, plays an important role in the de novo pathway and in the salvage pathway of purine nucleotide biosynthesis. Catalyzes the first committed step in the biosynthesis of AMP from IMP. The sequence is that of Adenylosuccinate synthetase 1, chloroplastic from Sorghum bicolor (Sorghum).